The following is an 81-amino-acid chain: MAVKIRLRRMGAHKAPFYRVVVADSRSPRDGRFIEEIGYYNPIAKPEAEVKIDAEKAAKWLGNGAQPTDIVKKLFNQAGIK.

The protein belongs to the bacterial ribosomal protein bS16 family.

In Clostridium perfringens (strain ATCC 13124 / DSM 756 / JCM 1290 / NCIMB 6125 / NCTC 8237 / Type A), this protein is Small ribosomal subunit protein bS16.